Here is a 466-residue protein sequence, read N- to C-terminus: Adenosylhomocysteinase (466 aa).

Threonine 57, aspartate 132, and glutamate 192 together coordinate substrate. Position 193-195 (threonine 193–threonine 195) interacts with NAD(+). The substrate site is built by lysine 222 and aspartate 226. NAD(+) contacts are provided by residues asparagine 227, glycine 256–glycine 261, glutamate 279, asparagine 314, isoleucine 335–histidine 337, and asparagine 380.

It belongs to the adenosylhomocysteinase family. It depends on NAD(+) as a cofactor.

The protein resides in the cytoplasm. It carries out the reaction S-adenosyl-L-homocysteine + H2O = L-homocysteine + adenosine. The protein operates within amino-acid biosynthesis; L-homocysteine biosynthesis; L-homocysteine from S-adenosyl-L-homocysteine: step 1/1. Its function is as follows. May play a key role in the regulation of the intracellular concentration of adenosylhomocysteine. The protein is Adenosylhomocysteinase of Rhizobium rhizogenes (strain K84 / ATCC BAA-868) (Agrobacterium radiobacter).